The chain runs to 427 residues: Trigger factor (427 aa).

The PPIase FKBP-type domain maps to glycine 163–proline 248.

It belongs to the FKBP-type PPIase family. Tig subfamily.

It localises to the cytoplasm. The enzyme catalyses [protein]-peptidylproline (omega=180) = [protein]-peptidylproline (omega=0). In terms of biological role, involved in protein export. Acts as a chaperone by maintaining the newly synthesized protein in an open conformation. Functions as a peptidyl-prolyl cis-trans isomerase. In Streptococcus mutans serotype c (strain ATCC 700610 / UA159), this protein is Trigger factor.